Consider the following 188-residue polypeptide: Elongation factor P (188 aa).

Lys34 carries the N6-(3,6-diaminohexanoyl)-5-hydroxylysine modification.

This sequence belongs to the elongation factor P family. Post-translationally, may be beta-lysylated on the epsilon-amino group of Lys-34 by the combined action of EpmA and EpmB, and then hydroxylated on the C5 position of the same residue by EpmC (if this protein is present). Lysylation is critical for the stimulatory effect of EF-P on peptide-bond formation. The lysylation moiety may extend toward the peptidyltransferase center and stabilize the terminal 3-CCA end of the tRNA. Hydroxylation of the C5 position on Lys-34 may allow additional potential stabilizing hydrogen-bond interactions with the P-tRNA.

The protein localises to the cytoplasm. It participates in protein biosynthesis; polypeptide chain elongation. Functionally, involved in peptide bond synthesis. Alleviates ribosome stalling that occurs when 3 or more consecutive Pro residues or the sequence PPG is present in a protein, possibly by augmenting the peptidyl transferase activity of the ribosome. Modification of Lys-34 is required for alleviation. The polypeptide is Elongation factor P (Coxiella burnetii (strain CbuG_Q212) (Coxiella burnetii (strain Q212))).